A 166-amino-acid chain; its full sequence is Calmodulin-like protein 5 (166 aa).

4 consecutive EF-hand domains span residues 11–46 (EQVA…LGQT), 47–82 (PTRE…KASR), 96–131 (AADE…LGEK), and 132–166 (LTDE…LSDQ). Ca(2+) is bound by residues Asp-24, Asp-26, Asp-28, Cys-30, Glu-35, Asp-60, Asp-62, Asn-64, Thr-66, Glu-71, Asp-109, Asp-111, Asp-113, and Glu-120. An N6,N6,N6-trimethyllysine modification is found at Lys-131. Ca(2+) contacts are provided by Asp-145, Asp-147, Asp-149, Gln-151, and Glu-156.

The protein belongs to the calmodulin family.

In terms of biological role, potential calcium sensor. In Oryza sativa subsp. japonica (Rice), this protein is Calmodulin-like protein 5 (CML5).